We begin with the raw amino-acid sequence, 172 residues long: Crossover junction endodeoxyribonuclease RuvC (172 aa).

Active-site residues include aspartate 7, glutamate 68, and aspartate 141. Aspartate 7, glutamate 68, and aspartate 141 together coordinate Mg(2+).

This sequence belongs to the RuvC family. In terms of assembly, homodimer which binds Holliday junction (HJ) DNA. The HJ becomes 2-fold symmetrical on binding to RuvC with unstacked arms; it has a different conformation from HJ DNA in complex with RuvA. In the full resolvosome a probable DNA-RuvA(4)-RuvB(12)-RuvC(2) complex forms which resolves the HJ. It depends on Mg(2+) as a cofactor.

The protein resides in the cytoplasm. The enzyme catalyses Endonucleolytic cleavage at a junction such as a reciprocal single-stranded crossover between two homologous DNA duplexes (Holliday junction).. Functionally, the RuvA-RuvB-RuvC complex processes Holliday junction (HJ) DNA during genetic recombination and DNA repair. Endonuclease that resolves HJ intermediates. Cleaves cruciform DNA by making single-stranded nicks across the HJ at symmetrical positions within the homologous arms, yielding a 5'-phosphate and a 3'-hydroxyl group; requires a central core of homology in the junction. The consensus cleavage sequence is 5'-(A/T)TT(C/G)-3'. Cleavage occurs on the 3'-side of the TT dinucleotide at the point of strand exchange. HJ branch migration catalyzed by RuvA-RuvB allows RuvC to scan DNA until it finds its consensus sequence, where it cleaves and resolves the cruciform DNA. The protein is Crossover junction endodeoxyribonuclease RuvC of Frankia casuarinae (strain DSM 45818 / CECT 9043 / HFP020203 / CcI3).